The primary structure comprises 90 residues: Histone H1.M6.2 (90 aa).

The interval 1–90 is disordered; that stretch reads MSDAAVPPKK…KAVKKAPKKK (90 aa). A compositionally biased stretch (basic residues) spans 11–90; it reads ASPKKAAAKK…KAVKKAPKKK (80 aa).

The protein resides in the nucleus. It is found in the chromosome. The sequence is that of Histone H1.M6.2 from Trypanosoma cruzi.